The following is a 355-amino-acid chain: Fructose-1,6-bisphosphatase class 1 (355 aa).

Mg(2+)-binding residues include Glu-90, Asp-109, Leu-111, and Asp-112. Substrate is bound by residues 112-115, Asn-204, and 256-258; these read DGSS and YLY. Residue Glu-276 coordinates Mg(2+).

This sequence belongs to the FBPase class 1 family. As to quaternary structure, homotetramer. The cofactor is Mg(2+).

The protein localises to the cytoplasm. It catalyses the reaction beta-D-fructose 1,6-bisphosphate + H2O = beta-D-fructose 6-phosphate + phosphate. It functions in the pathway carbohydrate biosynthesis; gluconeogenesis. The polypeptide is Fructose-1,6-bisphosphatase class 1 (Acidiphilium cryptum (strain JF-5)).